The chain runs to 141 residues: HTH-type transcriptional repressor NsrR (141 aa).

An HTH rrf2-type domain is found at 2 to 129; it reads QLTSFTDYGL…DQYTLADMVK (128 aa). A DNA-binding region (H-T-H motif) is located at residues 28–51; sequence ISEVTEVYGVSRNHMVKIINQLSR. [2Fe-2S] cluster is bound by residues Cys91, Cys96, and Cys102.

The cofactor is [2Fe-2S] cluster.

Nitric oxide-sensitive repressor of genes involved in protecting the cell against nitrosative stress. May require iron for activity. In Pectobacterium atrosepticum (strain SCRI 1043 / ATCC BAA-672) (Erwinia carotovora subsp. atroseptica), this protein is HTH-type transcriptional repressor NsrR.